A 215-amino-acid chain; its full sequence is Large ribosomal subunit protein bL25 (215 aa).

Over residues 1 to 10 the composition is skewed to polar residues; that stretch reads MAKSASNQLR. Disordered stretches follow at residues 1 to 25 and 187 to 215; these read MAKS…SRRA and ELEG…GESE.

This sequence belongs to the bacterial ribosomal protein bL25 family. CTC subfamily. As to quaternary structure, part of the 50S ribosomal subunit; part of the 5S rRNA/L5/L18/L25 subcomplex. Contacts the 5S rRNA. Binds to the 5S rRNA independently of L5 and L18.

This is one of the proteins that binds to the 5S RNA in the ribosome where it forms part of the central protuberance. The protein is Large ribosomal subunit protein bL25 of Mycobacterium bovis (strain ATCC BAA-935 / AF2122/97).